Reading from the N-terminus, the 36-residue chain is Lambda-hexatoxin-Hv1b (36 aa).

Disulfide bonds link Cys-3–Cys-17, Cys-10–Cys-22, Cys-13–Cys-14, and Cys-16–Cys-33.

Belongs to the neurotoxin 11 (kappa toxin) family. In terms of tissue distribution, expressed by the venom gland.

It localises to the secreted. Functionally, this excitatory toxin inhibits insect calcium-activated potassium (KCa) channels (Slo-type). This is Lambda-hexatoxin-Hv1b from Hadronyche versuta (Blue mountains funnel-web spider).